A 938-amino-acid chain; its full sequence is Isoleucine--tRNA ligase (938 aa).

The short motif at 58–68 is the 'HIGH' region element; that stretch reads PYANGSIHIGH. N6-acetyllysine is present on Lys-183. Glu-561 contacts L-isoleucyl-5'-AMP. The short motif at 602-606 is the 'KMSKS' region element; the sequence is KMSKS. ATP is bound at residue Lys-605. Residues Cys-901, Cys-904, Cys-921, and Cys-924 each coordinate Zn(2+).

This sequence belongs to the class-I aminoacyl-tRNA synthetase family. IleS type 1 subfamily. In terms of assembly, monomer. Zn(2+) is required as a cofactor.

The protein localises to the cytoplasm. The catalysed reaction is tRNA(Ile) + L-isoleucine + ATP = L-isoleucyl-tRNA(Ile) + AMP + diphosphate. Catalyzes the attachment of isoleucine to tRNA(Ile). As IleRS can inadvertently accommodate and process structurally similar amino acids such as valine, to avoid such errors it has two additional distinct tRNA(Ile)-dependent editing activities. One activity is designated as 'pretransfer' editing and involves the hydrolysis of activated Val-AMP. The other activity is designated 'posttransfer' editing and involves deacylation of mischarged Val-tRNA(Ile). This chain is Isoleucine--tRNA ligase, found in Escherichia coli O7:K1 (strain IAI39 / ExPEC).